A 555-amino-acid chain; its full sequence is Formate--tetrahydrofolate ligase (555 aa).

Threonine 63–threonine 70 is a binding site for ATP.

Belongs to the formate--tetrahydrofolate ligase family.

The enzyme catalyses (6S)-5,6,7,8-tetrahydrofolate + formate + ATP = (6R)-10-formyltetrahydrofolate + ADP + phosphate. The protein operates within one-carbon metabolism; tetrahydrofolate interconversion. This is Formate--tetrahydrofolate ligase from Beijerinckia indica subsp. indica (strain ATCC 9039 / DSM 1715 / NCIMB 8712).